Reading from the N-terminus, the 160-residue chain is Nucleotide-binding protein VP1617 (160 aa).

This sequence belongs to the YajQ family.

Nucleotide-binding protein. In Vibrio parahaemolyticus serotype O3:K6 (strain RIMD 2210633), this protein is Nucleotide-binding protein VP1617.